Here is a 103-residue protein sequence, read N- to C-terminus: Large ribosomal subunit protein uL24 (103 aa).

It belongs to the universal ribosomal protein uL24 family. In terms of assembly, part of the 50S ribosomal subunit.

One of two assembly initiator proteins, it binds directly to the 5'-end of the 23S rRNA, where it nucleates assembly of the 50S subunit. Its function is as follows. One of the proteins that surrounds the polypeptide exit tunnel on the outside of the subunit. The polypeptide is Large ribosomal subunit protein uL24 (Enterococcus faecalis (strain ATCC 700802 / V583)).